The following is a 371-amino-acid chain: Zinc finger CCCH domain-containing protein 21 (371 aa).

A disordered region spans residues 1–64 (MPPKQQPKAD…AAKKKKEEEK (64 aa)). The segment covering 10–23 (DLAKKQKQVEDKTF) has biased composition (basic and acidic residues). The span at 34–46 (VQKYVQSLKQSVQ) shows a compositional bias: polar residues. 2 consecutive C3H1-type zinc fingers follow at residues 88-115 (DPKS…HDLN) and 159-197 (KPTD…HALP). 2 coiled-coil regions span residues 205–237 (QMKA…ATQM) and 283–317 (FVDD…GTSK). The tract at residues 290–371 (CEEYEREREQ…IREPNDEGSS (82 aa)) is disordered. Residues 292 to 312 (EYEREREQEETEQKAKNKEAE) are compositionally biased toward basic and acidic residues. The span at 330–352 (NEEEEDDDDDDDDLDMDELDELE) shows a compositional bias: acidic residues.

The chain is Zinc finger CCCH domain-containing protein 21 from Arabidopsis thaliana (Mouse-ear cress).